Here is a 600-residue protein sequence, read N- to C-terminus: ATP-dependent zinc metalloprotease FtsH 1 (600 aa).

Topologically, residues 1 to 8 (MKTHYFKK) are cytoplasmic. The chain crosses the membrane as a helical span at residues 9-29 (IFNLKFLVIFFSILFCILLIL). Residues 30–130 (DLTFERRIKG…PKTDFHLSEL (101 aa)) lie on the Extracellular side of the membrane. Residues 131 to 151 (ILSLVPIVSSTIFMFYIISNI) form a helical membrane-spanning segment. Over 152-600 (KKSSGKLNSN…IEQLVVNTKK (449 aa)) the chain is Cytoplasmic. An ATP-binding site is contributed by 215–222 (GPPGTGKT). H437 lines the Zn(2+) pocket. E438 is an active-site residue. H441 and D513 together coordinate Zn(2+).

The protein in the central section; belongs to the AAA ATPase family. This sequence in the C-terminal section; belongs to the peptidase M41 family. In terms of assembly, homohexamer. Zn(2+) is required as a cofactor.

It localises to the cell membrane. Its function is as follows. Acts as a processive, ATP-dependent zinc metallopeptidase for both cytoplasmic and membrane proteins. Plays a role in the quality control of integral membrane proteins. This is ATP-dependent zinc metalloprotease FtsH 1 from Phytoplasma mali (strain AT).